Reading from the N-terminus, the 72-residue chain is Large ribosomal subunit protein bL28 (72 aa).

The protein belongs to the bacterial ribosomal protein bL28 family.

In Chlorobaculum parvum (strain DSM 263 / NCIMB 8327) (Chlorobium vibrioforme subsp. thiosulfatophilum), this protein is Large ribosomal subunit protein bL28.